We begin with the raw amino-acid sequence, 810 residues long: Lon protease (810 aa).

The Lon N-terminal domain maps to 40–233 (LIIVPVRGFV…MVAKLLAQRI (194 aa)). 385–392 (GPPGVGKT) contacts ATP. The Lon proteolytic domain occupies 621 to 802 (LSVPGVATGL…DDAMAAAFEG (182 aa)). Catalysis depends on residues S708 and K751.

It belongs to the peptidase S16 family. As to quaternary structure, homohexamer. Organized in a ring with a central cavity.

It localises to the cytoplasm. It carries out the reaction Hydrolysis of proteins in presence of ATP.. In terms of biological role, ATP-dependent serine protease that mediates the selective degradation of mutant and abnormal proteins as well as certain short-lived regulatory proteins. Required for cellular homeostasis and for survival from DNA damage and developmental changes induced by stress. Degrades polypeptides processively to yield small peptide fragments that are 5 to 10 amino acids long. Binds to DNA in a double-stranded, site-specific manner. The chain is Lon protease from Methylocella silvestris (strain DSM 15510 / CIP 108128 / LMG 27833 / NCIMB 13906 / BL2).